The primary structure comprises 525 residues: Cytochrome P450 CYP72A613 (525 aa).

A helical transmembrane segment spans residues Val-2–Ile-22. Cys-473 is a binding site for heme.

The protein belongs to the cytochrome P450 family. Mainly expressed in leaves and seed pods and, to a lower extent, in flowers and stems.

The protein resides in the membrane. The protein operates within steroid metabolism; cholesterol metabolism. In terms of biological role, involved in the biosynthesis of spiroketal steroid and saponin natural products from cholesterol such as diosgenin and analogs (e.g. furostanol and spirostanol), plant defense compounds used as main precursors for the industrial production of steroid hormones. During the 5,6-spiroketalization of cholesterol, may catalyze the 27-monohydroxylation of furostanol-type steroid to an intermediate product that undergoes a stereospecific formation of the terminal heterocycle to yield diosgenin. The sequence is that of Cytochrome P450 CYP72A613 from Trigonella foenum-graecum (Fenugreek).